The following is a 295-amino-acid chain: Pyridoxal 5'-phosphate synthase subunit PdxS (295 aa).

Asp23 serves as a coordination point for D-ribose 5-phosphate. The Schiff-base intermediate with D-ribose 5-phosphate role is filled by Lys80. Gly152 serves as a coordination point for D-ribose 5-phosphate. A D-glyceraldehyde 3-phosphate-binding site is contributed by Arg164. D-ribose 5-phosphate contacts are provided by residues Gly213 and 234–235; that span reads GS.

It belongs to the PdxS/SNZ family. In terms of assembly, in the presence of PdxT, forms a dodecamer of heterodimers.

The enzyme catalyses aldehydo-D-ribose 5-phosphate + D-glyceraldehyde 3-phosphate + L-glutamine = pyridoxal 5'-phosphate + L-glutamate + phosphate + 3 H2O + H(+). It participates in cofactor biosynthesis; pyridoxal 5'-phosphate biosynthesis. Catalyzes the formation of pyridoxal 5'-phosphate from ribose 5-phosphate (RBP), glyceraldehyde 3-phosphate (G3P) and ammonia. The ammonia is provided by the PdxT subunit. Can also use ribulose 5-phosphate and dihydroxyacetone phosphate as substrates, resulting from enzyme-catalyzed isomerization of RBP and G3P, respectively. The chain is Pyridoxal 5'-phosphate synthase subunit PdxS from Methanopyrus kandleri (strain AV19 / DSM 6324 / JCM 9639 / NBRC 100938).